The chain runs to 194 residues: Aminodeoxychorismate/anthranilate synthase component 2 (194 aa).

Residues 1–194 (MILMIDNYDS…IETYRKEVIA (194 aa)) form the Glutamine amidotransferase type-1 domain. Residues C79, H168, and E170 contribute to the active site.

In terms of assembly, monomer. Heterodimer consisting of two non-identical subunits: a glutamine amidotransferase subunit (PabA) and a aminodeoxychorismate synthase subunit (PabB).

It carries out the reaction chorismate + L-glutamine = anthranilate + pyruvate + L-glutamate + H(+). The enzyme catalyses chorismate + L-glutamine = 4-amino-4-deoxychorismate + L-glutamate. The protein operates within amino-acid biosynthesis; L-tryptophan biosynthesis; L-tryptophan from chorismate: step 1/5. It functions in the pathway cofactor biosynthesis; tetrahydrofolate biosynthesis; 4-aminobenzoate from chorismate: step 1/2. In terms of biological role, part of a heterodimeric complex that catalyzes the two-step biosynthesis of 4-amino-4-deoxychorismate (ADC), a precursor of p-aminobenzoate (PABA) and tetrahydrofolate. In the first step, a glutamine amidotransferase (PabA) generates ammonia as a substrate that, along with chorismate, is used in the second step, catalyzed by aminodeoxychorismate synthase (PabB) to produce ADC. PabA converts glutamine into glutamate only in the presence of stoichiometric amounts of PabB. Also involved in the biosynthesis of anthranilate. Complements a glutamine amidotransferase-negative mutant. The chain is Aminodeoxychorismate/anthranilate synthase component 2 from Bacillus subtilis (strain 168).